A 67-amino-acid polypeptide reads, in one-letter code: Large ribosomal subunit protein uL30 (67 aa).

This sequence belongs to the universal ribosomal protein uL30 family. In terms of assembly, part of the 50S ribosomal subunit.

The chain is Large ribosomal subunit protein uL30 from Thermotoga maritima (strain ATCC 43589 / DSM 3109 / JCM 10099 / NBRC 100826 / MSB8).